The chain runs to 206 residues: Ras-related protein Rab7 (206 aa).

GTP is bound by residues 15 to 22 (GDSGVGKT), 63 to 67 (DTAGQ), and 125 to 128 (NKVD). Residues C205 and C206 are each lipidated (S-geranylgeranyl cysteine).

It belongs to the small GTPase superfamily. Rab family.

Its subcellular location is the cell membrane. Functionally, protein transport. Probably involved in vesicular traffic. This Cenchrus ciliaris (Buffelgrass) protein is Ras-related protein Rab7.